We begin with the raw amino-acid sequence, 449 residues long: Signal recognition particle protein (449 aa).

Residues 109 to 116 (GLQGSGKT), 191 to 195 (DTAGR), and 249 to 252 (SRID) contribute to the GTP site.

This sequence belongs to the GTP-binding SRP family. SRP54 subfamily. As to quaternary structure, part of the signal recognition particle protein translocation system, which is composed of SRP and FtsY. SRP is a ribonucleoprotein composed of Ffh and a 4.5S RNA molecule.

It is found in the cytoplasm. It carries out the reaction GTP + H2O = GDP + phosphate + H(+). Its function is as follows. Involved in targeting and insertion of nascent membrane proteins into the cytoplasmic membrane. Binds to the hydrophobic signal sequence of the ribosome-nascent chain (RNC) as it emerges from the ribosomes. The SRP-RNC complex is then targeted to the cytoplasmic membrane where it interacts with the SRP receptor FtsY. Interaction with FtsY leads to the transfer of the RNC complex to the Sec translocase for insertion into the membrane, the hydrolysis of GTP by both Ffh and FtsY, and the dissociation of the SRP-FtsY complex into the individual components. This is Signal recognition particle protein from Rickettsia bellii (strain RML369-C).